Reading from the N-terminus, the 129-residue chain is NADH-quinone oxidoreductase subunit 15 (129 aa).

It belongs to the complex I Nqo15 family. NDH-1 is composed of 15 different subunits, Nqo1 to Nqo15. The complex has a L-shaped structure, with the hydrophobic arm (subunits Nqo7, Nqo8 and Nqo10 to Nqo14) embedded in the membrane and the hydrophilic peripheral arm (subunits Nqo1 to Nqo6, Nqo9 and Nqo15) protruding into the bacterial cytoplasm. The hydrophilic domain contains all the redox centers. Nqo15 is bound to the side of the complex near the N-terminus of Nqo3, where it interacts with subunits Nqo3, Nqo2, Nqo1, Nqo9 and Nqo4.

It localises to the cell membrane. The enzyme catalyses a quinone + NADH + 5 H(+)(in) = a quinol + NAD(+) + 4 H(+)(out). In terms of biological role, NDH-1 shuttles electrons from NADH, via FMN and iron-sulfur (Fe-S) centers, to quinones in the respiratory chain. The immediate electron acceptor for the enzyme in this species is menaquinone. Couples the redox reaction to proton translocation (for every two electrons transferred, four hydrogen ions are translocated across the cytoplasmic membrane), and thus conserves the redox energy in a proton gradient required for the synthesis of ATP. The Nqo15 subunit has probably a role in complex stabilization, and may be also involved in the storage of iron for iron-sulfur cluster regeneration in the complex. This Thermus thermophilus (strain ATCC 27634 / DSM 579 / HB8) protein is NADH-quinone oxidoreductase subunit 15 (nqo15).